A 207-amino-acid chain; its full sequence is Thiamine-phosphate synthase (207 aa).

Residues glutamine 36–lysine 40 and asparagine 68 each bind 4-amino-2-methyl-5-(diphosphooxymethyl)pyrimidine. Aspartate 69 and aspartate 88 together coordinate Mg(2+). Serine 106 is a 4-amino-2-methyl-5-(diphosphooxymethyl)pyrimidine binding site. Threonine 132–threonine 134 contacts 2-[(2R,5Z)-2-carboxy-4-methylthiazol-5(2H)-ylidene]ethyl phosphate. 4-amino-2-methyl-5-(diphosphooxymethyl)pyrimidine is bound at residue lysine 135. Residues glycine 162 and valine 182 to serine 183 contribute to the 2-[(2R,5Z)-2-carboxy-4-methylthiazol-5(2H)-ylidene]ethyl phosphate site.

This sequence belongs to the thiamine-phosphate synthase family. Mg(2+) is required as a cofactor.

The catalysed reaction is 2-[(2R,5Z)-2-carboxy-4-methylthiazol-5(2H)-ylidene]ethyl phosphate + 4-amino-2-methyl-5-(diphosphooxymethyl)pyrimidine + 2 H(+) = thiamine phosphate + CO2 + diphosphate. The enzyme catalyses 2-(2-carboxy-4-methylthiazol-5-yl)ethyl phosphate + 4-amino-2-methyl-5-(diphosphooxymethyl)pyrimidine + 2 H(+) = thiamine phosphate + CO2 + diphosphate. It catalyses the reaction 4-methyl-5-(2-phosphooxyethyl)-thiazole + 4-amino-2-methyl-5-(diphosphooxymethyl)pyrimidine + H(+) = thiamine phosphate + diphosphate. It participates in cofactor biosynthesis; thiamine diphosphate biosynthesis; thiamine phosphate from 4-amino-2-methyl-5-diphosphomethylpyrimidine and 4-methyl-5-(2-phosphoethyl)-thiazole: step 1/1. In terms of biological role, condenses 4-methyl-5-(beta-hydroxyethyl)thiazole monophosphate (THZ-P) and 2-methyl-4-amino-5-hydroxymethyl pyrimidine pyrophosphate (HMP-PP) to form thiamine monophosphate (TMP). This is Thiamine-phosphate synthase from Methanococcus maripaludis (strain C6 / ATCC BAA-1332).